Consider the following 802-residue polypeptide: DSC E3 ubiquitin ligase complex subunit A (802 aa).

A signal peptide spans 1–22 (MDNRGSFFFLLIVFYLLLSSQS). The Lumenal segment spans residues 23–381 (RPPLLDQDRE…TGPKIEEYDK (359 aa)). 6 N-linked (GlcNAc...) asparagine glycosylation sites follow: N48, N71, N115, N126, N148, and N166. Residues 382-402 (YSARLVFIICGVFAAQITLLL) traverse the membrane as a helical segment. Topologically, residues 403 to 429 (RQIKEASTPSTRSRISFYTIALMAFGD) are cytoplasmic. The helical transmembrane segment at 430–450 (AFVLIFILLELYPAVSFLVMA) threads the bilayer. The Lumenal portion of the chain corresponds to 451-453 (TAA). Residues 454 to 474 (FLTFLSVSYIGMKFMMEIWAV) form a helical membrane-spanning segment. At 475–550 (QAPERREQER…QETRNDVGAM (76 aa)) the chain is on the cytoplasmic side. A disordered region spans residues 478–541 (ERREQERRSN…TNRGTTSAAQ (64 aa)). Polar residues predominate over residues 532–541 (TNRGTTSAAQ). A helical membrane pass occupies residues 551–571 (YARFYFVLFVMLIISIWSFLW). The Lumenal portion of the chain corresponds to 572–574 (PNR). A helical membrane pass occupies residues 575–595 (LGALYARALAFVYLSFWTPQI). At 596–608 (GRNIIRNCRKALR) the chain is on the cytoplasmic side. The chain crosses the membrane as a helical span at residues 609-629 (WDFVIGQSILRLFPFVYFLTV). Residues 630 to 642 (RGNVLFIHPDTTT) are Lumenal-facing. The helical transmembrane segment at 643 to 663 (AFALAGWVWIQVWVLASQDIL) threads the bilayer. At 664 to 802 (GPRFFVPRGW…PICRESIPPV (139 aa)) the chain is on the cytoplasmic side. Residues 732 to 796 (CAICMQEIEV…RLRLQCPICR (65 aa)) form an RING-type; atypical zinc finger.

Component of the DSC E3 ubiquitin ligase complex composed of dscA, dscB, dscC and dscD.

It localises to the endoplasmic reticulum membrane. The enzyme catalyses S-ubiquitinyl-[E2 ubiquitin-conjugating enzyme]-L-cysteine + [acceptor protein]-L-lysine = [E2 ubiquitin-conjugating enzyme]-L-cysteine + N(6)-ubiquitinyl-[acceptor protein]-L-lysine.. It functions in the pathway protein modification; protein ubiquitination. Catalytic component of the DSC E3 ubiquitin ligase complex which is required for the srbA transcriptional activator proteolytic cleavage to release the soluble transcription factor from the membrane in low oxygen or sterol conditions. Required for growth during hypoxia and triazole drug susceptibility, as well as for virulence in a murine model of invasive pulmonary aspergillosis (IPA). The chain is DSC E3 ubiquitin ligase complex subunit A from Aspergillus fumigatus (strain CBS 144.89 / FGSC A1163 / CEA10) (Neosartorya fumigata).